A 137-amino-acid polypeptide reads, in one-letter code: DNA-binding protein H-NS (137 aa).

Residues 112–117 (QGRTPA) mediate DNA binding.

Belongs to the histone-like protein H-NS family. Homodimer that oligomerizes on DNA into higher-order complexes that form bridges between disparate regions of DNA compacting it. Interacts with Hha, Cnu and StpA.

Its subcellular location is the cytoplasm. It localises to the nucleoid. In terms of biological role, a DNA-binding protein implicated in transcriptional repression and chromosome organization and compaction. Binds nucleation sites in AT-rich DNA and bridges them, forming higher-order nucleoprotein complexes and condensing the chromosome. As many horizontally transferred genes are AT-rich, it plays a central role in silencing foreign genes. A subset of genes are repressed by H-NS in association with other proteins. This Escherichia coli O6:H1 (strain CFT073 / ATCC 700928 / UPEC) protein is DNA-binding protein H-NS (hns).